A 379-amino-acid polypeptide reads, in one-letter code: Homoserine O-acetyltransferase (379 aa).

An AB hydrolase-1 domain is found at 45-355 (NAILILHALT…PHGHDAFLIE (311 aa)). Ser151 (nucleophile) is an active-site residue. Position 220 (Arg220) interacts with substrate. Catalysis depends on residues Asp316 and His349. Substrate is bound at residue Asp350.

It belongs to the AB hydrolase superfamily. MetX family. Homodimer.

Its subcellular location is the cytoplasm. The catalysed reaction is L-homoserine + acetyl-CoA = O-acetyl-L-homoserine + CoA. It functions in the pathway amino-acid biosynthesis; L-methionine biosynthesis via de novo pathway; O-acetyl-L-homoserine from L-homoserine: step 1/1. Transfers an acetyl group from acetyl-CoA to L-homoserine, forming acetyl-L-homoserine. The chain is Homoserine O-acetyltransferase from Carboxydothermus hydrogenoformans (strain ATCC BAA-161 / DSM 6008 / Z-2901).